Here is a 556-residue protein sequence, read N- to C-terminus: Set1/Ash2 histone methyltransferase complex subunit ASH2 (556 aa).

The segment covering 1–19 (MEDSQMDTSSPTESSSEVN) has biased composition (polar residues). The interval 1–27 (MEDSQMDTSSPTESSSEVNFTAEEDKS) is disordered. The segment at 34–90 (AGVCYCGKERNLNIVELLCATCSRWVHETCVSYQLGKGKLLPFITNYVFVCKNCSAS) adopts a PHD-type zinc-finger fold. The Zn(2+) site is built by Cys-37, Cys-39, Cys-52, Cys-55, His-60, Cys-63, Cys-84, and Cys-87. A disordered region spans residues 216–251 (ASLSKNNRQKRKFPGTDSGPTGKKGRPSSDITANVK). A B30.2/SPRY domain is found at 288-510 (SSDWAGKPIP…VSVNFGPAFK (223 aa)).

Core component of several methyltransferase-containing complexes. Component of the SET1C/COMPASS complex, composed at least of the catalytic subunit Set1, wds/WDR5, Wdr82, Rbbp5, ash2, Cfp1/CXXC1, hcf and Dpy-30L1. Component of the MLL3/4 (Histone-lysine N-methyltransferase/demethylase TRR) complex composed at least of the catalytic subunit trr, ash2, Rbbp5, Dpy-30L1, wds, hcf, ptip, Pa1, Utx, Lpt and Ncoa6. Interacts with hcf. Interacts with trr. In terms of assembly, interacts (via B30.2/SPRY domain) with sktl; the interaction is direct. In terms of tissue distribution, in larvae and pupae, expressed in imaginal disks, salivary gland and fat body cells. No expression detected in central nervous system (at protein level).

The protein localises to the nucleus. It localises to the chromosome. Transcriptional regulator. Regulates a number of genes involved in wing development including activation of net and bs and repression of rho and kni and controls vein-intervein patterning during wing development. Required for correct expression of a number of homeotic genes including Scr in the first leg imaginal disk and Ubx in the third leg imaginal disk and haltere disks. Required for stabilization of the histone-lysine N-methyltransferase trr and for trimethylation of 'Lys-4' of histone H3. Together with sktl probably plays a role in maintenance of transcriptionally active chromatin through down-regulation of histone H1 hyperphosphorylation. This chain is Set1/Ash2 histone methyltransferase complex subunit ASH2, found in Drosophila melanogaster (Fruit fly).